The following is a 418-amino-acid chain: Thyroid hormone receptor alpha-A (418 aa).

Positions 1–38 (MDQNLSGLDCLSEPDEKRWPDGKRKRKNSQCMGKSGMS) are disordered. A modulating region spans residues 1–60 (MDQNLSGLDCLSEPDEKRWPDGKRKRKNSQCMGKSGMSGDSLVSLPSAGYIPSYLDKDEP). 2 consecutive NR C4-type zinc fingers follow at residues 61-81 (CVVC…CEGC) and 99-123 (CKYD…FKKC). Positions 61-135 (CVVCSDKATG…VGMAMDLVLD (75 aa)) form a DNA-binding region, nuclear receptor. Residues 171–415 (EEWELIRIVT…PPLFLEVFED (245 aa)) form the NR LBD domain.

It belongs to the nuclear hormone receptor family. NR1 subfamily. Binds to thyroid hormone receptor element (TRE) weakly as homodimers and monomers, but binds TRE with much higher affinity as heterodimers with retinoid X receptors. Can bind DNA as a heterodimer with either rxra or rxrg.

The protein resides in the nucleus. High affinity receptor for triiodothyronine (T3). This Xenopus laevis (African clawed frog) protein is Thyroid hormone receptor alpha-A (thra-a).